The primary structure comprises 482 residues: Keratin, type I cytoskeletal 39 (482 aa).

The tract at residues 1–24 (MDTKGSTVTISSSTPPQNCSGNTN) is disordered. The tract at residues 1–91 (MDTKGSTVTI…RCTEGINTHE (91 aa)) is head. The IF rod domain occupies 91–402 (EKETMQILNE…SLLESLDGRL (312 aa)). Residues 92-126 (KETMQILNERLANYLEKVRMLEGENADLEDKIQEA) form a coil 1A region. The interval 127–137 (CSKALPILCPD) is linker 1. Residues 138–238 (YLSYYTTIEE…HEEEVNSLQC (101 aa)) form a coil 1B region. The tract at residues 239-254 (QLGDRINIEVTAAPSV) is linker 12. Positions 255–398 (DLNQILQEMR…ATYRSLLESL (144 aa)) are coil 2. The interval 399–482 (DGRLPCNPCA…PCYITRATKV (84 aa)) is tail.

The protein belongs to the intermediate filament family. In terms of assembly, heterotetramer of two type I and two type II keratins.

Its function is as follows. May play a role in late hair differentiation. The chain is Keratin, type I cytoskeletal 39 (Krt39) from Mus musculus (Mouse).